The chain runs to 327 residues: Delta(6)-protoilludene synthase HYPSUDRAFT_138665 (327 aa).

Mg(2+)-binding residues include aspartate 79, asparagine 215, serine 219, and glutamate 223. Residues 79–83 (DEHTD) carry the DDXXD motif motif. Residues arginine 304 and tyrosine 305 each coordinate (2E,6E)-farnesyl diphosphate.

This sequence belongs to the terpene synthase family. Mg(2+) is required as a cofactor.

It carries out the reaction (2E,6E)-farnesyl diphosphate = Delta(6)-protoilludene + diphosphate. Its function is as follows. Terpene cyclase that catalyzes the cyclization of farnesyl diphosphate (FPP) to delta(6)-protoilludene. The protein is Delta(6)-protoilludene synthase HYPSUDRAFT_138665 of Hypholoma sublateritium (strain FD-334 SS-4).